The chain runs to 151 residues: Large ribosomal subunit protein uL13 (151 aa).

The interval 126–151 is disordered; the sequence is YPGPNHPHQAQKPEELTLNTIPNGDK. Residues 142–151 show a composition bias toward polar residues; the sequence is TLNTIPNGDK.

It belongs to the universal ribosomal protein uL13 family. As to quaternary structure, part of the 50S ribosomal subunit.

Functionally, this protein is one of the early assembly proteins of the 50S ribosomal subunit, although it is not seen to bind rRNA by itself. It is important during the early stages of 50S assembly. This is Large ribosomal subunit protein uL13 from Crocosphaera subtropica (strain ATCC 51142 / BH68) (Cyanothece sp. (strain ATCC 51142)).